A 152-amino-acid polypeptide reads, in one-letter code: D-aminoacyl-tRNA deacylase (152 aa).

A Gly-cisPro motif, important for rejection of L-amino acids motif is present at residues 142-143 (GP).

It belongs to the DTD family. In terms of assembly, homodimer.

It is found in the cytoplasm. The catalysed reaction is glycyl-tRNA(Ala) + H2O = tRNA(Ala) + glycine + H(+). It carries out the reaction a D-aminoacyl-tRNA + H2O = a tRNA + a D-alpha-amino acid + H(+). An aminoacyl-tRNA editing enzyme that deacylates mischarged D-aminoacyl-tRNAs. Also deacylates mischarged glycyl-tRNA(Ala), protecting cells against glycine mischarging by AlaRS. Acts via tRNA-based rather than protein-based catalysis; rejects L-amino acids rather than detecting D-amino acids in the active site. By recycling D-aminoacyl-tRNA to D-amino acids and free tRNA molecules, this enzyme counteracts the toxicity associated with the formation of D-aminoacyl-tRNA entities in vivo and helps enforce protein L-homochirality. This is D-aminoacyl-tRNA deacylase from Paraburkholderia xenovorans (strain LB400).